The sequence spans 144 residues: Sentan (144 aa).

Positions 1–31 are disordered; that stretch reads MCGCRASVPSTKHYSVNPAPTTRSPPAAAGM. The span at 18-29 shows a compositional bias: low complexity; that stretch reads PAPTTRSPPAAA.

It belongs to the S-100 family.

It is found in the cell projection. The protein resides in the cilium. Its function is as follows. May be a component of the linker structure that bridges the ciliary membrane and peripheral singlet microtubules. This chain is Sentan, found in Gallus gallus (Chicken).